A 293-amino-acid chain; its full sequence is tRNA(His) guanylyltransferase (293 aa).

Mg(2+) is bound by residues Asp29, Gly30, and Asp76. Residues 29-34 and 75-76 contribute to the GTP site; these read DGRGFT and SD. Residues 226-252 form a disordered region; that stretch reads KKVSEEEAEEMSSSAVPEVKSKSQVEK.

It belongs to the tRNA(His) guanylyltransferase family. Mg(2+) is required as a cofactor.

The enzyme catalyses a 5'-end ribonucleotide-tRNA(His) + GTP + ATP + H2O = a 5'-end phospho-guanosine-ribonucleotide-tRNA(His) + AMP + 2 diphosphate + H(+). Adds a GMP to the 5'-end of tRNA(His) after transcription and RNase P cleavage. The protein is tRNA(His) guanylyltransferase (rgt-1) of Neurospora crassa (strain ATCC 24698 / 74-OR23-1A / CBS 708.71 / DSM 1257 / FGSC 987).